The primary structure comprises 399 residues: 1-deoxy-D-xylulose 5-phosphate reductoisomerase (399 aa).

NADPH is bound by residues T13, G14, S15, I16, and N127. K128 lines the 1-deoxy-D-xylulose 5-phosphate pocket. E129 is a binding site for NADPH. D153 lines the Mn(2+) pocket. The 1-deoxy-D-xylulose 5-phosphate site is built by S154, E155, S187, and H210. E155 contributes to the Mn(2+) binding site. Residue G216 participates in NADPH binding. 1-deoxy-D-xylulose 5-phosphate-binding residues include S223, N228, K229, and E232. Mn(2+) is bound at residue E232.

It belongs to the DXR family. The cofactor is Mg(2+). Mn(2+) is required as a cofactor.

The catalysed reaction is 2-C-methyl-D-erythritol 4-phosphate + NADP(+) = 1-deoxy-D-xylulose 5-phosphate + NADPH + H(+). It participates in isoprenoid biosynthesis; isopentenyl diphosphate biosynthesis via DXP pathway; isopentenyl diphosphate from 1-deoxy-D-xylulose 5-phosphate: step 1/6. Its function is as follows. Catalyzes the NADPH-dependent rearrangement and reduction of 1-deoxy-D-xylulose-5-phosphate (DXP) to 2-C-methyl-D-erythritol 4-phosphate (MEP). The chain is 1-deoxy-D-xylulose 5-phosphate reductoisomerase from Bordetella petrii (strain ATCC BAA-461 / DSM 12804 / CCUG 43448).